Consider the following 355-residue polypeptide: Probable butyrate kinase (355 aa).

This sequence belongs to the acetokinase family.

It is found in the cytoplasm. The enzyme catalyses butanoate + ATP = butanoyl phosphate + ADP. This is Probable butyrate kinase from Listeria monocytogenes serotype 4b (strain CLIP80459).